The sequence spans 198 residues: FMN-dependent NADH:quinone oxidoreductase (198 aa).

Residues 92–95 (MWNL) and 136–139 (SRGG) contribute to the FMN site.

The protein belongs to the azoreductase type 1 family. In terms of assembly, homodimer. It depends on FMN as a cofactor.

The catalysed reaction is 2 a quinone + NADH + H(+) = 2 a 1,4-benzosemiquinone + NAD(+). The enzyme catalyses N,N-dimethyl-1,4-phenylenediamine + anthranilate + 2 NAD(+) = 2-(4-dimethylaminophenyl)diazenylbenzoate + 2 NADH + 2 H(+). In terms of biological role, quinone reductase that provides resistance to thiol-specific stress caused by electrophilic quinones. Also exhibits azoreductase activity. Catalyzes the reductive cleavage of the azo bond in aromatic azo compounds to the corresponding amines. This Clostridium perfringens (strain ATCC 13124 / DSM 756 / JCM 1290 / NCIMB 6125 / NCTC 8237 / Type A) protein is FMN-dependent NADH:quinone oxidoreductase.